A 75-amino-acid chain; its full sequence is Pi-hexatoxin-Hi1b (75 aa).

6 disulfide bridges follow: cysteine 3/cysteine 18, cysteine 10/cysteine 23, cysteine 17/cysteine 33, cysteine 40/cysteine 55, cysteine 47/cysteine 60, and cysteine 54/cysteine 71. Domain repeat units lie at residues 3–33 and 40–71; these read CIRKWLSCVDRKNDCCEGLECYKRRHSFEVC and CLVKWKQCDGRERDCCPGLECWKRSGNKSSVC. The segment at 3–71 is 2 X approximate repeats with cysteine pattern C-C-CC-C-C; it reads CIRKWLSCVD…KRSGNKSSVC (69 aa).

It belongs to the psalmotoxin-1 family. Double-knot toxin subfamily. As to expression, expressed by the venom gland.

The protein localises to the secreted. In terms of biological role, this toxin potently and selectively inhibits ASIC1a, an isoform of the gene ASIC1. It incompletely inhibits ASIC1a activation in a pH-independent and slowly reversible manner. This toxin acts by binding to and stabilizing the closed state of the channel, thereby impeding the transition into a conducting state. This toxin may bind to the acidic pocket of ASIC1a, since mutation of a key residue of this pocket (Arg-350) abolishes the ability of the toxin to inhibit ASIC1a. In vivo, this toxin protects the brain from neuronal injury when administered up to 8 hours after stroke onset. The polypeptide is Pi-hexatoxin-Hi1b (Hadronyche infensa (Fraser island funnel-web spider)).